The following is a 275-amino-acid chain: Large ribosomal subunit protein uL2c (275 aa).

Positions 225-259 (KNPVDHPHGGGEGRAPIGRSTPVTPWGKPALGRRT) are disordered.

The protein belongs to the universal ribosomal protein uL2 family. As to quaternary structure, part of the 50S ribosomal subunit.

It is found in the plastid. It localises to the cyanelle. This chain is Large ribosomal subunit protein uL2c (rpl2), found in Cyanophora paradoxa.